We begin with the raw amino-acid sequence, 439 residues long: Xylose isomerase (439 aa).

Active-site residues include H101 and D104. E232, E268, H271, D296, D307, D309, and D339 together coordinate Mg(2+).

It belongs to the xylose isomerase family. Homotetramer. Requires Mg(2+) as cofactor.

It localises to the cytoplasm. The catalysed reaction is alpha-D-xylose = alpha-D-xylulofuranose. This Haemophilus influenzae (strain 86-028NP) protein is Xylose isomerase.